We begin with the raw amino-acid sequence, 260 residues long: Shikimate dehydrogenase (NADP(+)) (260 aa).

Shikimate-binding positions include 14–16 (SAS) and T60. K64 functions as the Proton acceptor in the catalytic mechanism. The shikimate site is built by N85 and D100. NADP(+)-binding positions include 121–125 (GAGGA), 145–150 (NRTYER), and F201. Y203 serves as a coordination point for shikimate. Residue G225 participates in NADP(+) binding.

Belongs to the shikimate dehydrogenase family. As to quaternary structure, homodimer.

It catalyses the reaction shikimate + NADP(+) = 3-dehydroshikimate + NADPH + H(+). It functions in the pathway metabolic intermediate biosynthesis; chorismate biosynthesis; chorismate from D-erythrose 4-phosphate and phosphoenolpyruvate: step 4/7. In terms of biological role, involved in the biosynthesis of the chorismate, which leads to the biosynthesis of aromatic amino acids. Catalyzes the reversible NADPH linked reduction of 3-dehydroshikimate (DHSA) to yield shikimate (SA). In Pyrobaculum islandicum (strain DSM 4184 / JCM 9189 / GEO3), this protein is Shikimate dehydrogenase (NADP(+)).